The primary structure comprises 1154 residues: Paired amphipathic helix protein pst3 (1154 aa).

Disordered regions lie at residues 1–71 and 91–110; these read MDVM…RSVT and SGKDGSISSQNAEGLSSSSN. The span at 9 to 27 shows a compositional bias: basic and acidic residues; the sequence is DSERDNPGDKVETQSDKNH. Composition is skewed to polar residues over residues 32–45 and 100–110; these read SPSQSQSPVNTSLH and QNAEGLSSSSN. The region spanning 111–181 is the PAH 1 domain; the sequence is RPLDVNDALS…EGFNTFLPSG (71 aa). Disordered regions lie at residues 199–249 and 321–376; these read GTPM…STEN and DNVD…KTSR. Low complexity predominate over residues 228–241; that stretch reads STSPTDSQPQPSAP. In terms of domain architecture, PAH 2 spans 252–322; it reads PRVDFNYAIA…EEFKLFLPDN (71 aa). 2 stretches are compositionally biased toward polar residues: residues 323-337 and 365-376; these read VDSTEPSTPNVQKSP and AQISRSISKTSR. In terms of domain architecture, PAH 3 spans 403 to 472; the sequence is SPYAATQEEL…LWFSEFIRWS (70 aa). The tract at residues 797 to 824 is disordered; the sequence is NSNNTNVSFQTDETQTEDETMSDIHPDD.

Its subcellular location is the nucleus. This is Paired amphipathic helix protein pst3 (pst3) from Schizosaccharomyces pombe (strain 972 / ATCC 24843) (Fission yeast).